Here is a 482-residue protein sequence, read N- to C-terminus: E3 ubiquitin-protein ligase parkin (482 aa).

Residues 30–99 (LSIYVKTNTG…LGQQSVLHAI (70 aa)) form the Ubiquitin-like domain. Residue S94 is modified to Phosphoserine; by Pink1. An RING-type 0; atypical zinc finger spans residues 157–246 (AHFFVHCSQC…SGGEKDFAAP (90 aa)). Zn(2+)-binding residues include C163, C166, C178, and C181. T187 is modified (phosphothreonine; by Pink1). Positions 208, 232, 235, 259, 262, 274, 278, 281, 284, 310, 314, 353, 358, 373, 377, 382, 385, 390, 394, 436, and 439 each coordinate Zn(2+). Residues 255–482 (KNVPCLACTD…RDCMGAHWFG (228 aa)) form a TRIAD supradomain region. Residues 259–314 (CLACTDVSDTVLVFPCASQHVTCIDCFRHYCRSRLGERQFMPHPDFGYTLPCPAGC) form an RING-type 1 zinc finger. 2 consecutive IBR-type zinc fingers follow at residues 334–394 (DRYQ…IGEC) and 432–473 (STKP…EWTR). The RING-type 2; atypical zinc finger occupies 436-467 (CPKCRTPTERDGGCMHMVCTRAGCGFEWCWVC). C449 is an active-site residue. Residues C454, C459, C464, C467, C475, and H479 each coordinate Zn(2+).

Belongs to the RBR family. Parkin subfamily. In terms of assembly, forms an E3 ubiquitin ligase complex with E2 ubiquitin-conjugating enzymes. Interacts with Pink1. Interacts with Marf. Interacts with Paris. Interacts with septins Septin1 and pnut. Auto-ubiquitinates in an E2-dependent manner leading to its own degradation. In terms of processing, phosphorylated. Activation requires phosphorylation at Ser-94 by Pink1 and binding to Pink1-phosphorylated polyubiquitin chains. Phosphorylation at Thr-187 by Pink1 is also important for mitochondrial localization. In oocytes, accumulates in early egg chambers where it is enriched until stages 9-10, localizing mainly to the posterior pole and anterior margin (at protein level). After stage 10 it is no longer detected in the oocyte (at protein level). In embryos, ubiquitously expressed in the early stages (stages 2 to 5) (at protein level). Expression levels decrease at later stages and becomes restricted to the brain and nerve cord from stage 9 (at protein level). Relatively higher levels of expression in the head compared to the body. Enriched in the dorsomedial (DM) dopaminergic neurons.

It is found in the mitochondrion. Its subcellular location is the cytoplasm. The protein localises to the cytosol. It catalyses the reaction [E2 ubiquitin-conjugating enzyme]-S-ubiquitinyl-L-cysteine + [acceptor protein]-L-lysine = [E2 ubiquitin-conjugating enzyme]-L-cysteine + [acceptor protein]-N(6)-ubiquitinyl-L-lysine.. It functions in the pathway protein modification; protein ubiquitination. Its activity is regulated as follows. In the autoinhibited state the side chain of Phe-481 inserts into a hydrophobic groove in RING-0, occluding the ubiquitin acceptor site Cys-449, whereas the REP repressor element binds RING-1 and blocks its E2-binding site. Activation of park requires 2 steps: (1) phosphorylation at Ser-94 by Pink1 and (2) binding to phosphorylated ubiquitin, leading to unlock repression of the catalytic Cys-449 by the RING-0 region via an allosteric mechanism and converting park to its fully-active form. According to another report, phosphorylation at Ser-94 by Pink1 is not essential for activation and only binding to phosphorylated ubiquitin is essential to unlock repression. Its function is as follows. E3 ubiquitin-protein ligase which accepts ubiquitin from E2 ubiquitin-conjugating enzymes in the form of a thioester and then directly transfers the ubiquitin to targeted substrates, such as Paris, Marf, Opa1, Miro, pnut, Septin1, Tom20 and porin. Mediates monoubiquitination as well as 'Lys-6', 'Lys-11', 'Lys-48'-linked and 'Lys-63'-linked polyubiquitination of substrates, depending on the context. Protects against mitochondrial dysfunction during cellular stress, by acting downstream of Pink1, to coordinate mitochondrial quality control mechanisms that remove and replace dysfunctional mitochondrial components. Depending on the severity of mitochondrial damage and/or dysfunction, activity ranges from preventing apoptosis and stimulating mitochondrial biogenesis to regulating mitochondrial dynamics and eliminating severely damaged mitochondria via mitophagy. Appears to be particularly important in maintaining the physiology and function of cells with high energy demands that are undergoing stress or altered metabolic environment, including spermatids, muscle cells and neurons such as the dopaminergic (DA) neurons. Activation and recruitment onto the outer membrane of damaged/dysfunctional mitochondria (OMM) requires Pink1-mediated phosphorylation of both park and ubiquitin. In depolarized mitochondria, mediates the decision between mitophagy or preventing apoptosis by inducing either the poly- or monoubiquitination of porin/VDAC; polyubiquitination of porin promotes mitophagy, while monoubiquitination of porin decreases mitochondrial calcium influx which ultimately inhibits apoptosis. When cellular stress results in irreversible mitochondrial damage, promotes the autophagic degradation of dysfunctional depolarized mitochondria (mitophagy) by promoting the ubiquitination of mitochondrial proteins. Preferentially assembles 'Lys-6'-, 'Lys-11'- and 'Lys-63'-linked polyubiquitin chains following mitochondrial damage, leading to mitophagy. In developing tissues, inhibits JNK-mediated apoptosis by negatively regulating bsk transcription. The Pink1-park pathway also promotes fission and/or inhibits fusion of damaged mitochondria by mediating the ubiquitination and subsequent degradation of proteins involved in mitochondrial fusion/fission such as Marf, Opa1 and fzo. This prevents the refusion of unhealthy mitochondria with the healthy mitochondrial network and/or initiates mitochondrial fragmentation facilitating their later engulfment by autophagosomes. Regulates motility of damaged mitochondria by phosphorylating Miro which likely promotes its park-dependent degradation by the proteasome; in motor neurons, this inhibits mitochondrial intracellular anterograde transport along the axons which probably increases the chance of the mitochondria being eliminated in the soma. The Pink1-park pathway is also involved in mitochondrial regeneration processes such as promoting mitochondrial biogenesis, activating localized mitochondrial repair, promoting selective turnover of mitochondrial proteins and initiating the mitochondrial import of endogenous proteins. Involved in mitochondrial biogenesis via the ubiquitination of transcriptional repressor Paris which leads to its subsequent proteasomal degradation and allows activation of the transcription factor srl. Promotes localized mitochondrial repair by activating the translation of specific nuclear-encoded mitochondrial RNAs (nc-mtRNAs) on the mitochondrial surface, including several key electron transport chain component nc-mtRNAs. This chain is E3 ubiquitin-protein ligase parkin, found in Drosophila melanogaster (Fruit fly).